Consider the following 186-residue polypeptide: T-cell receptor-associated transmembrane adapter 1 (186 aa).

Residues 1–7 are Extracellular-facing; sequence MSGISGC. A helical; Signal-anchor for type III membrane protein transmembrane segment spans residues 8-28; sequence PFFLWGLLALLGLALVISLIF. At 29-186 the chain is on the cytoplasmic side; sequence NISHYVEKQR…LIRAKREPIN (158 aa). Serine 46 carries the post-translational modification Phosphoserine. Tyrosine 79 is subject to Phosphotyrosine. An interaction with PIK3R1 region spans residues 79 to 82; that stretch reads YEQM. A disordered region spans residues 116–140; sequence SVKGKRRKPRKQNTHFSDKDGDEQL. Positions 118 to 128 are enriched in basic residues; the sequence is KGKRRKPRKQN. The segment covering 131 to 140 has biased composition (basic and acidic residues); it reads FSDKDGDEQL.

As to quaternary structure, homodimer; disulfide-linked. Interacts with CD3Z. When phosphorylated, interacts with PIK3R1. Post-translationally, phosphorylated on tyrosines by LCK or FYN upon TCR activation. Strongly expressed in thymus, and to a lesser extent in spleen, lymph node and peripheral blood lymphocytes. Present in T-cells and NK cells, but not B-cells (at protein level).

It localises to the cell membrane. Its function is as follows. Stabilizes the TCR (T-cell antigen receptor)/CD3 complex at the surface of T-cells. This Homo sapiens (Human) protein is T-cell receptor-associated transmembrane adapter 1 (TRAT1).